Consider the following 214-residue polypeptide: Transmembrane emp24 domain-containing protein p24beta3 (214 aa).

The N-terminal stretch at 1–27 (MERRQAKIHVFVLIGLILLNSINQISS) is a signal peptide. The Lumenal portion of the chain corresponds to 28–178 (LSVTVNDEEC…RHTNESTRKR (151 aa)). The GOLD domain maps to 35-122 (EECVQEYVLY…PETVSFYIHV (88 aa)). Residues 140–158 (VNVKIAELREALESVVAEQ) adopt a coiled-coil conformation. Omega-N-methylated arginine occurs at positions 164 and 169. Residue Asn172 is glycosylated (N-linked (GlcNAc...) asparagine). The chain crosses the membrane as a helical span at residues 179-199 (VIFYTVGEYIFLAAASGLQVL). At 200–214 (YIRKLFSKSVAYNRV) the chain is on the cytoplasmic side. A COPII vesicle coat-binding motif is present at residues 204-205 (LF). The COPI vesicle coat-binding signature appears at 204-214 (LFSKSVAYNRV). A Required for the export from the endoplasmic reticulum to the Golgi motif is present at residues 213 to 214 (RV).

Belongs to the EMP24/GP25L family. Probably oligomerizes with other members of the EMP24/GP25L family. Associates with the COPI vesicle coat (coatomer). Associates with the COPII vesicle coat (coatomer).

It is found in the golgi apparatus. The protein localises to the cis-Golgi network membrane. The protein resides in the golgi stack membrane. Functionally, involved in vesicular protein trafficking. Mainly functions in the early secretory pathway but also in post-Golgi membranes. Thought to act as cargo receptor at the lumenal side for incorporation of secretory cargo molecules into transport vesicles and to be involved in vesicle coat formation at the cytoplasmic side. This chain is Transmembrane emp24 domain-containing protein p24beta3, found in Arabidopsis thaliana (Mouse-ear cress).